The following is a 1263-amino-acid chain: MSKTSKSNKNPKSIEEKYQKKNLHEHILHSPDTYIGSIEEKTCNMWIFNESAGEDDAKIIFKEITYVPGLYKIYDEVIVNAADHNKRCQTCNIIKVDIDQKTGQISVWNNGDGIDVAIHKEHNIWVPSMIFGELLTSTNYDKNEEKTVGGKNGFGAKLANIYSVEFTIETVDANKGKKFFQRFTNNMYDKEEPKISSFKKSSYTKITFIPDFKKFGLKCLDDDTLALFKKRVFDLAMTTNAKVYFNDKQIVQNNFKKYVGLYFPEGSQHKVVIDDTTHERWKVGVIYDPTDQLEHQNISFVNSICTSRGGTHVEQVVGQIVNGLKTAIVKKAKNVQIKPAMIKENLIFFVDATIVNPDFDTQTKEYLTKKAANFGSKFEVTEKFIKGVIKTGVCDQIIANAKAREEANLSKTDGKGRGPVRYEKLYNAHKAGTKEGYKCTLILTEGDSAKTFAMSGLNVIGRDYYGVFPLRGKLLNVRDASPKKIADNEEITAIKKIVGLEQGKVYDDLKGLRYGSIMILADQDVDGYHIKGLIMNFIHCFWPSLVKYEGFIQSFATPLLKATKGKGKTKQVVAFTSPQSFEEWKKENNDGKGWSIKYYKGLGTSDPAEAQECFADLNDKLVKYFWEPKKKNLESESNSKSVDSNKSKTTNKKKIESEFIEEESDIISDTYKPKNKDISEDAMTLAFAGGREDDRKIWINTYNPDNYLDPSKKRISYYDFIHKELITFSVDDVLRSVPNLMDGFKPSHRKVFYGSVEKNIYKQEIKVSDLTGFVSNMTKYHHGDQSLSSTIVGMAQNYVGSNNLNLLMPLGMFGSRLTGGKDSASPRYLNTKLDDLAKKIFIDYDFDILQHQSEDNCRIEPVYYAPIIPMILVNGAEGIGTGYSTKIYPCNPRDIIANIKRLLTNENPKTMKPWFRHLTGTIEKIDGAKYISRAKYEIIGKDTIHITDLPVGIWTDNYKAFLDNLIVQGTAQNAEEKKASKAVSSAKNTKTTTKAGSKTGSRTRKNPALAKKSQKSVTAKVAKKNPVASSIKTYSEDCTDIRISFTIVFHPGKLDTLIKSGKLDTGLKLVKPLNLTNMHLFNEKGKIKKYDTYGAILRNFVKVRLNLYQKRKDYLLGKWKKEMDILKWKVKFIEYVIEGKIVIFKNGKSKKKEEVLKALEDLKFPKFIVGNESYPSYGYITSIGLFNLTLEEVEKLKKQLADKKQELAILEAKSPEEIWEEELDEFVEAYDIWEKEVDENYNDLLNKKKGSTGKKSRKTSTQK.

ATP contacts are provided by residues Asn-80, Asn-109, 137–139 (STN), and 150–157 (GKNGFGAK). An interaction with DNA region spans residues 329 to 331 (VKK). Residue 362-364 (QTK) participates in ATP binding. The region spanning 439–553 (CTLILTEGDS…SLVKYEGFIQ (115 aa)) is the Toprim domain. Positions 445, 522, and 524 each coordinate Mg(2+). The 487-residue stretch at 737–1223 (VPNLMDGFKP…SPEEIWEEEL (487 aa)) folds into the Topo IIA-type catalytic domain. Catalysis depends on Tyr-828, which acts as the O-(5'-phospho-DNA)-tyrosine intermediate. Residues 977–1015 (KKASKAVSSAKNTKTTTKAGSKTGSRTRKNPALAKKSQK) form a disordered region. Residues 981–1000 (KAVSSAKNTKTTTKAGSKTG) show a composition bias toward low complexity. Residues 1068–1077 (KLVKPLNLTN) form an interaction with DNA region. The segment at 1244-1263 (LLNKKKGSTGKKSRKTSTQK) is disordered. A compositionally biased stretch (basic residues) spans 1247–1263 (KKKGSTGKKSRKTSTQK).

It belongs to the type II topoisomerase family. Mg(2+) serves as cofactor. The cofactor is Mn(2+). Ca(2+) is required as a cofactor.

It catalyses the reaction ATP-dependent breakage, passage and rejoining of double-stranded DNA.. Can introduce negative superhelical turns into double-stranded circular DNA. This is DNA topoisomerase 2 (TOP2) from Acanthamoeba polyphaga (Amoeba).